Reading from the N-terminus, the 198-residue chain is MASSSTRKYETRKRDPNSKIAALLVIDMQNHFSSMAKPILNNVLTTIDICRRASVPVFFTRHNHKSPTDHGMLGEWCNGDVILDGTTDSEIIQEIQGQVTGPDEMVEKNTYSAFNKTRLQENLEKIGVKEVIVIGVMTNLCCETTAREAFIKGFRVFFSTDATATFNEELHEATLMNLAFGFAYLVDCDKLRRSLLGN.

The protein belongs to the isochorismatase family.

It catalyses the reaction nicotinamide + H2O = nicotinate + NH4(+). It functions in the pathway cofactor biosynthesis; nicotinate biosynthesis; nicotinate from nicotinamide: step 1/1. Functionally, catalyzes the deamidation of nicotinamide, an early step in the NAD(+) salvage pathway. Prevents the accumulation of intracellular nicotinamide, a known inhibitor of poly(ADP-ribose) polymerases (PARP enzymes). This chain is Nicotinamidase 3, found in Arabidopsis thaliana (Mouse-ear cress).